The following is a 592-amino-acid chain: K(+) efflux antiporter 4 (592 aa).

An N-terminal signal peptide occupies residues 1–35 (MRRCKNNTDKFSVITMRLLTLLLICTFFFFFSFAY). A run of 12 helical transmembrane segments spans residues 169-189 (LISD…AFAC), 193-213 (PVIT…LSFV), 221-241 (TVAQ…FSAA), 248-268 (AVAI…SGIT), 279-299 (GIFV…KFLM), 313-333 (VGTL…LPVL), 343-363 (VLSM…LFVL), 388-408 (LAAV…GLSL), 437-457 (NFFA…HFLW), 462-482 (ILLA…AIVV), 491-511 (TAVL…VLLS), and 535-555 (LVTT…GVLL).

It belongs to the monovalent cation:proton antiporter 2 (CPA2) transporter (TC 2.A.37) family. KEA (TC 2.A.37.1) subfamily. In terms of tissue distribution, expressed in roots, stems, leaves, flowers and silique.

It is found in the golgi apparatus membrane. It localises to the golgi apparatus. The protein localises to the trans-Golgi network membrane. Its subcellular location is the prevacuolar compartment membrane. The protein resides in the endomembrane system. The catalysed reaction is K(+)(in) + H(+)(out) = K(+)(out) + H(+)(in). Electroneutral K(+)/H(+) efflux antiporter involved in K(+) homeostasis and osmotic adjustment. Together with KEA5 and KEA6, promotes growth and development, and facilitates endosomal pH and ions homeostasis, as well as salt tolerance (e.g. K(+), NaCl and LiCl), probably by supporting cell wall biosynthesis during rapid etiolated seedling growth. The polypeptide is K(+) efflux antiporter 4 (Arabidopsis thaliana (Mouse-ear cress)).